The primary structure comprises 247 residues: MAGHSKWANIKFRKGVQDAKRGKIFTKLIREITVAARMGGGDESSNPRLRDAVKKALNANMKRDTIDNAVKRGVGGADGEAMIAMRYEGYGPGGVAILVDCLSDNKNRTVSEVRHAFSKHGGNLGTDGSVSYLFTNQGEILMASNQPEDKVMEIAIDAGASDVAVEDSQIEIITPVEAYHTVLNALQDAGLEVEQSHLTMRAQTLVPISDETAESLIKLIDMLEDLDDVQEVYSNAEFSEKILESMN.

This sequence belongs to the TACO1 family.

The protein localises to the cytoplasm. The chain is Probable transcriptional regulatory protein lpp1249 from Legionella pneumophila (strain Paris).